Here is a 432-residue protein sequence, read N- to C-terminus: Glutamine synthetase, chloroplastic (432 aa).

The GS beta-grasp domain occupies 79-159 (IIAEYIWIGG…VICDTYTPQG (81 aa)). Residues 166–432 (KRHKAAQIFS…LAAQKLSLNV (267 aa)) form the GS catalytic domain.

Belongs to the glutamine synthetase family. As to quaternary structure, homooctamer.

It is found in the plastid. It localises to the chloroplast. The catalysed reaction is L-glutamate + NH4(+) + ATP = L-glutamine + ADP + phosphate + H(+). The light-modulated chloroplast enzyme, encoded by a nuclear gene and expressed primarily in leaves, is responsible for the reassimilation of the ammonia generated by photorespiration. This chain is Glutamine synthetase, chloroplastic (GLN2), found in Daucus carota (Wild carrot).